The primary structure comprises 250 residues: 1-acyl-sn-glycerol-3-phosphate acyltransferase (250 aa).

The HXXXXD motif signature appears at histidine 88–aspartate 93.

The protein belongs to the 1-acyl-sn-glycerol-3-phosphate acyltransferase family.

The catalysed reaction is a 1-acyl-sn-glycero-3-phosphate + an acyl-CoA = a 1,2-diacyl-sn-glycero-3-phosphate + CoA. The protein operates within phospholipid metabolism; CDP-diacylglycerol biosynthesis; CDP-diacylglycerol from sn-glycerol 3-phosphate: step 2/3. Converts lysophosphatidic acid (LPA) into phosphatidic acid by incorporating acyl moiety at the 2 position. This Borreliella burgdorferi (strain ATCC 35210 / DSM 4680 / CIP 102532 / B31) (Borrelia burgdorferi) protein is 1-acyl-sn-glycerol-3-phosphate acyltransferase (plsC).